The sequence spans 226 residues: Lipoprotein-releasing system ATP-binding protein LolD 1 (226 aa).

The ABC transporter domain occupies 6-226 (LRLDKVTRSF…TLREGKVVAA (221 aa)). 42 to 49 (GPSGAGKS) contacts ATP.

Belongs to the ABC transporter superfamily. Lipoprotein translocase (TC 3.A.1.125) family. In terms of assembly, the complex is composed of two ATP-binding proteins (LolD) and two transmembrane proteins (LolC and LolE).

Its subcellular location is the cell inner membrane. Part of the ABC transporter complex LolCDE involved in the translocation of mature outer membrane-directed lipoproteins, from the inner membrane to the periplasmic chaperone, LolA. Responsible for the formation of the LolA-lipoprotein complex in an ATP-dependent manner. In Rhodospirillum rubrum (strain ATCC 11170 / ATH 1.1.1 / DSM 467 / LMG 4362 / NCIMB 8255 / S1), this protein is Lipoprotein-releasing system ATP-binding protein LolD 1.